The chain runs to 304 residues: Quinolinate synthase (304 aa).

2 residues coordinate iminosuccinate: His24 and Ser41. Cys86 contributes to the [4Fe-4S] cluster binding site. Iminosuccinate is bound by residues 112–114 (YVN) and Ser129. Cys171 contacts [4Fe-4S] cluster. Iminosuccinate-binding positions include 197-199 (HPE) and Thr214. [4Fe-4S] cluster is bound at residue Cys259.

Belongs to the quinolinate synthase family. Type 2 subfamily. Requires [4Fe-4S] cluster as cofactor.

The protein resides in the cytoplasm. It carries out the reaction iminosuccinate + dihydroxyacetone phosphate = quinolinate + phosphate + 2 H2O + H(+). The protein operates within cofactor biosynthesis; NAD(+) biosynthesis; quinolinate from iminoaspartate: step 1/1. In terms of biological role, catalyzes the condensation of iminoaspartate with dihydroxyacetone phosphate to form quinolinate. The chain is Quinolinate synthase from Geobacter sp. (strain M21).